The primary structure comprises 483 residues: MLFRSVILSNALLLPACAHDILSNLDLSLPIAANAESYTDCANAAWPPSNVGVELVPQPPDDQLRAMVDEVSAENIEATITKLVSFGTRHTLSTFNSSTRGINAARDWIASEMRKYAAESNGTMTVEVQSYVQSVASRIPFPVTISNVLAKATGSEDPNRVYVMTGHYDSRVTDVLNYESDAPGANDDASGTAIAMELARVLAKHQPKSTIILGAVAGEEQGLYGSTYLAQTLKNTSTNVEGMLNCDIVGSSTGDRGQKDPFTIRAFAQGPPPISAESSARAAQRLQIGGENDSPARELARFSAEVAANNATGMNVAIIYRLDRFLRGGDHTGFLQAGYPAIRYTEPNENFAHQHQDIRTENGTVYGDLIEFVDFDFTARVGKVNLATLWSLAQAPAMPRNVTIDATILDNNSRIKWIVSNKTDVASYEVVWRSTIASLWTHMLDVGKVGYVVLPLSKDNVIFGIRAVGTNGFKSPAVYPFPA.

The N-terminal stretch at 1–18 (MLFRSVILSNALLLPACA) is a signal peptide. N-linked (GlcNAc...) asparagine glycans are attached at residues Asn96 and Asn121. Positions 167, 187, and 220 each coordinate Zn(2+). Residue Asn235 is glycosylated (N-linked (GlcNAc...) asparagine). Asp247 is a Zn(2+) binding site. N-linked (GlcNAc...) asparagine glycans are attached at residues Asn310, Asn362, Asn401, Asn411, and Asn421. A Fibronectin type-III domain is found at 396-483 (PAMPRNVTID…KSPAVYPFPA (88 aa)).

Belongs to the peptidase M28 family. M28B subfamily. Zn(2+) is required as a cofactor.

It localises to the secreted. In Pyrenophora teres f. teres (strain 0-1) (Barley net blotch fungus), this protein is Probable zinc metalloprotease PTT_08196.